The primary structure comprises 319 residues: Putative antiporter CaxA (319 aa).

Helical transmembrane passes span 3-23 (VATI…DRFV), 38-58 (MIIG…MVSA), 81-101 (ILLV…SMTI), 105-125 (FPLL…QSLT), 127-147 (AEGA…VYWG), 175-195 (VWLV…VHGA), 208-228 (LIGL…ASLI), 250-270 (ILAV…AAAA), 275-292 (YVMM…LRLG), and 297-317 (INRV…YLLF).

Belongs to the Ca(2+):cation antiporter (CaCA) (TC 2.A.19) family.

The protein resides in the cell membrane. Its function is as follows. Confers modest Ca(2+) and Na(+) resistance. This Alkalimonas amylolytica protein is Putative antiporter CaxA (caxA).